Consider the following 139-residue polypeptide: Histone H3-like 5 (139 aa).

The span at 1-10 (MARTKQTARI) shows a compositional bias: polar residues. Residues 1 to 43 (MARTKQTARISTGGKAPRKQLAPKAARQSAPATGGVKKPHRFR) are disordered. Lys5 carries the post-translational modification N6,N6,N6-trimethyllysine; alternate. The residue at position 5 (Lys5) is an N6,N6-dimethyllysine; alternate. Residue Lys5 is modified to N6-methyllysine; alternate. Ser11 is subject to Phosphoserine. Thr12 is modified (phosphothreonine). Lys15 is subject to N6-acetyllysine. N6-methyllysine; alternate is present on residues Lys19 and Lys24. N6-acetyllysine; alternate is present on residues Lys19 and Lys24. Ser29 is modified (phosphoserine). Lys37 is modified (N6,N6,N6-trimethyllysine; alternate). Lys37 is subject to N6,N6-dimethyllysine; alternate. Lys37 carries the post-translational modification N6-methyllysine; alternate.

Belongs to the histone H3 family. In terms of assembly, the nucleosome is a histone octamer containing two molecules each of H2A, H2B, H3 and H4 assembled in one H3-H4 heterotetramer and two H2A-H2B heterodimers. The octamer wraps approximately 147 bp of DNA.

The protein resides in the nucleus. It localises to the chromosome. Its function is as follows. Core component of nucleosome. Nucleosomes wrap and compact DNA into chromatin, limiting DNA accessibility to the cellular machineries which require DNA as a template. Histones thereby play a central role in transcription regulation, DNA repair, DNA replication and chromosomal stability. DNA accessibility is regulated via a complex set of post-translational modifications of histones, also called histone code, and nucleosome remodeling. This chain is Histone H3-like 5, found in Arabidopsis thaliana (Mouse-ear cress).